Here is a 125-residue protein sequence, read N- to C-terminus: Small ribosomal subunit protein eS8 (125 aa).

Basic residues predominate over residues 1-23; that stretch reads MQFQGRSRRKYTGAKLKSARGKR. The segment at 1–34 is disordered; it reads MQFQGRSRRKYTGAKLKSARGKRKFELGREPAAT.

This sequence belongs to the eukaryotic ribosomal protein eS8 family. In terms of assembly, part of the 30S ribosomal subunit.

This chain is Small ribosomal subunit protein eS8, found in Methanococcoides burtonii (strain DSM 6242 / NBRC 107633 / OCM 468 / ACE-M).